A 293-amino-acid chain; its full sequence is Probable 2-(5''-triphosphoribosyl)-3'-dephosphocoenzyme-A synthase (293 aa).

It belongs to the CitG/MdcB family.

The enzyme catalyses 3'-dephospho-CoA + ATP = 2'-(5''-triphospho-alpha-D-ribosyl)-3'-dephospho-CoA + adenine. Involved in the formation of 2-(5''-phosphoribosyl)-3'-dephosphocoenzyme-A, the prosthetic group of the acyl-carrier protein of the malonate decarboxylase. The polypeptide is Probable 2-(5''-triphosphoribosyl)-3'-dephosphocoenzyme-A synthase (Pseudomonas aeruginosa (strain ATCC 15692 / DSM 22644 / CIP 104116 / JCM 14847 / LMG 12228 / 1C / PRS 101 / PAO1)).